The sequence spans 425 residues: Inhibin beta A chain (425 aa).

Positions 1 to 20 are cleaved as a signal peptide; the sequence is MPLLWLRGFLLASCWIIVRS. Residues 21 to 309 constitute a propeptide that is removed on maturation; sequence SPTPGSEGHS…EDHPHRRRRR (289 aa). The N-linked (GlcNAc...) asparagine glycan is linked to N165. The disordered stretch occupies residues 260–289; sequence KKRKEEEGEGKKRDGEGGAGGDEEKEQSHR. A compositionally biased stretch (basic and acidic residues) spans 263-275; sequence KEEEGEGKKRDGE. 4 disulfide bridges follow: C313–C321, C320–C390, C349–C422, and C353–C424.

It belongs to the TGF-beta family. As to quaternary structure, dimeric, linked by one or more disulfide bonds. Inhibin A is a dimer of alpha/INHA and beta-A/INHBA. Activin A is a homodimer of beta-A/INHBA. Activin AB is a dimer of beta-A/INHBA and beta-B/INHBB. Interacts with FST and FSTL3; these interactions prevent activin A interaction to its type II receptor. Activin A interacts with ACVR2A. Activin A interacts with BMPR2. Inhibin A interacts with ACVR1; this interaction creates a non-signaling complex (NSC) that inhibits ACVR1-mediated BMP signaling. Inhibin A interacts with ACVR2A.

It localises to the secreted. In terms of biological role, inhibins/activins are involved in regulating a number of diverse functions such as hypothalamic and pituitary hormone secretion, gonadal hormone secretion, germ cell development and maturation, erythroid differentiation, insulin secretion, nerve cell survival, embryonic axial development or bone growth, depending on their subunit composition. Its function is as follows. Activin A is a homodimer of INHBA that plays a role in several essential biological processes including embryonic development, stem cell maintenance and differentiation, haematopoiesis, cell proliferation and tissue fibrosis. Signals through type I (such as ACVR1B or ACVR1C) and type II receptors (such as ACVR2A, ACVR2B or BMPR2) which, upon ligand binding, phosphorylate SMAD2 and SMAD3 intracellular signaling mediators that form a complex with SMAD4, translocate to the nucleus and modulate gene expression. Can also activate alternative non-canonical intracellular signaling pathways including the p38 MAPK, extracellular signal-regulated kinases 1/2 (ERK1/2) and c-Jun N-terminal kinases (JNKs) to modulate cell migration and differentiation. Alternatively, promotes osteoblastic differentiation via ACVRL1-SMAD1/5/9 pathway. In addition, can engage the type I receptor ACVR1 to form an ACVR1-activin A-type II receptor non-signaling complex (NSC) that renders receptors unavailable for engagement with BMPs, hence resulting in an apparent inhibition of ACVR1-mediated BMP signaling. Inhibin A is a dimer of alpha/INHA and beta-A/INHBA that functions as a feedback regulator in the hypothalamic-pituitary-gonadal (HPG) axis. Inhibits the secretion of FSH from the anterior pituitary gland by acting on pituitary gonadotrope cells. Antagonizes activin A by binding to the proteoglycan, betaglycan, and forming a stable complex with and, thereby, sequestering type II activin receptors while excluding type I receptor. This is Inhibin beta A chain (INHBA) from Ovis aries (Sheep).